The chain runs to 310 residues: tRNA-dihydrouridine(16) synthase (310 aa).

Residues 7–9 (PMQ) and Gln-68 contribute to the FMN site. Residue Cys-98 is the Proton donor of the active site. Residues Lys-139, 200–202 (NGE), and 224–225 (GR) contribute to the FMN site.

Belongs to the Dus family. DusC subfamily. The cofactor is FMN.

The catalysed reaction is 5,6-dihydrouridine(16) in tRNA + NADP(+) = uridine(16) in tRNA + NADPH + H(+). It carries out the reaction 5,6-dihydrouridine(16) in tRNA + NAD(+) = uridine(16) in tRNA + NADH + H(+). Its function is as follows. Catalyzes the synthesis of 5,6-dihydrouridine (D), a modified base found in the D-loop of most tRNAs, via the reduction of the C5-C6 double bond in target uridines. Specifically modifies U16 in tRNAs. This is tRNA-dihydrouridine(16) synthase from Haemophilus influenzae (strain ATCC 51907 / DSM 11121 / KW20 / Rd).